A 220-amino-acid polypeptide reads, in one-letter code: Adenylate kinase (220 aa).

13 to 18 (GAGKGT) contacts ATP. Residues 33–62 (ATGDMLRSQVARQTELGKEAKKIMDQGGLV) are NMP. Residues Thr34, Arg39, 60 to 62 (GLV), 89 to 92 (GFPR), and Gln96 each bind AMP. Residues 130–167 (GRLVHPGSGRSYHLEFNPPKVPMKDDVTGEPLIQRSDD) are LID. Residues Arg131 and 140–141 (SY) each bind ATP. AMP-binding residues include Arg164 and Arg175. Gln203 contributes to the ATP binding site.

This sequence belongs to the adenylate kinase family. AK2 subfamily. In terms of assembly, monomer.

It is found in the cytoplasm. It localises to the cytosol. Its subcellular location is the mitochondrion intermembrane space. The protein resides in the nucleus. The enzyme catalyses AMP + ATP = 2 ADP. Its function is as follows. Catalyzes the reversible transfer of the terminal phosphate group between ATP and AMP. Plays an important role in cellular energy homeostasis and in adenine nucleotide metabolism. Adenylate kinase activity is critical for regulation of the phosphate utilization and the AMP de novo biosynthesis pathways. The protein is Adenylate kinase (adk1) of Schizosaccharomyces pombe (strain 972 / ATCC 24843) (Fission yeast).